Here is a 375-residue protein sequence, read N- to C-terminus: Growth/differentiation factor 8 (375 aa).

An N-terminal signal peptide occupies residues 1–23 (MQKLAVYVYIYLFMQILVHPVAL). The propeptide occupies 24 to 266 (DGSSQPTENA…VTDTPKRSRR (243 aa)). An N-linked (GlcNAc...) asparagine glycan is attached at Asn-71. 4 disulfide bridges follow: Cys-272/Cys-282, Cys-281/Cys-340, Cys-309/Cys-372, and Cys-313/Cys-374.

Belongs to the TGF-beta family. As to quaternary structure, homodimer; disulfide-linked.

The protein localises to the secreted. Functionally, acts specifically as a negative regulator of skeletal muscle growth. In Meleagris gallopavo (Wild turkey), this protein is Growth/differentiation factor 8 (MSTN).